A 416-amino-acid polypeptide reads, in one-letter code: Gamma-glutamyl phosphate reductase (416 aa).

The protein belongs to the gamma-glutamyl phosphate reductase family.

It is found in the cytoplasm. It carries out the reaction L-glutamate 5-semialdehyde + phosphate + NADP(+) = L-glutamyl 5-phosphate + NADPH + H(+). The protein operates within amino-acid biosynthesis; L-proline biosynthesis; L-glutamate 5-semialdehyde from L-glutamate: step 2/2. In terms of biological role, catalyzes the NADPH-dependent reduction of L-glutamate 5-phosphate into L-glutamate 5-semialdehyde and phosphate. The product spontaneously undergoes cyclization to form 1-pyrroline-5-carboxylate. In Salmonella agona (strain SL483), this protein is Gamma-glutamyl phosphate reductase.